A 442-amino-acid chain; its full sequence is Lysosomal dipeptide transporter MFSD1 (442 aa).

Positions 8-9 (LL) match the Dileucine internalization motif motif. The next 10 helical transmembrane spans lie at 38 to 58 (LLVL…YDNP), 85 to 105 (TVIF…GALV), 107 to 127 (AFWL…SLAV), 187 to 207 (LLIG…LAYL), 238 to 258 (LWLI…FIGL), 276 to 296 (AINS…GILV), 303 to 323 (IIWV…LAFT), 333 to 353 (LLGV…AFVV), 364 to 384 (FMQS…GMIL), and 390 to 410 (LFLE…VVML).

It belongs to the major facilitator superfamily. In terms of assembly, homodimer. Interacts with lysosomal protein GLMP (via lumenal domain); the interaction starts while both proteins are still in the endoplasmic reticulum and is required for stabilization of MFSD1 in lysosomes but has no direct effect on its targeting to lysosomes or transporter activity.

The protein localises to the lysosome membrane. The catalysed reaction is L-alpha-aminoacyl-L-arginine(out) = L-alpha-aminoacyl-L-arginine(in). It carries out the reaction L-arginyl-L-alpha-amino acid(out) = L-arginyl-L-alpha-amino acid(in). It catalyses the reaction L-arginyl-glycine(out) = L-arginyl-glycine(in). The enzyme catalyses L-alpha-aminoacyl-L-lysine(out) = L-alpha-aminoacyl-L-lysine(in). The catalysed reaction is L-aspartyl-L-lysine(out) = L-aspartyl-L-lysine(in). It carries out the reaction L-alanyl-L-lysine(out) = L-alanyl-L-lysine(in). It catalyses the reaction L-lysyl-L-alpha-amino acid(out) = L-lysyl-L-alpha-amino acid(in). The enzyme catalyses L-lysyl-L-alanine(out) = L-lysyl-L-alanine(in). The catalysed reaction is L-lysyl-L-lysine(out) = L-lysyl-L-lysine(in). It carries out the reaction L-lysyl-glycine(out) = L-lysyl-glycine(in). It catalyses the reaction L-alpha-aminoacyl-L-histidine(out) = L-alpha-aminoacyl-L-histidine(in). The enzyme catalyses L-histidyl-L-alpha-amino acid(out) = L-histidyl-L-alpha-amino acid(in). The catalysed reaction is L-histidyl-glycine(out) = L-histidyl-glycine(in). Its function is as follows. Lysosomal dipeptide uniporter that selectively exports lysine, arginine or histidine-containing dipeptides with a net positive charge from the lysosome lumen into the cytosol. Could play a role in a specific type of protein O-glycosylation indirectly regulating macrophages migration and tissue invasion. Also essential for liver homeostasis. The protein is Lysosomal dipeptide transporter MFSD1 of Gallus gallus (Chicken).